Consider the following 401-residue polypeptide: Elongation factor Tu 1 (401 aa).

Positions 10 to 209 (KPHVNVGTIG…AVDEYIPTPV (200 aa)) constitute a tr-type G domain. The interval 19–26 (GHVDHGKT) is G1. 19-26 (GHVDHGKT) serves as a coordination point for GTP. Thr-26 serves as a coordination point for Mg(2+). The interval 60–64 (GITIA) is G2. Residues 81-84 (DCPG) form a G3 region. Residues 81–85 (DCPGH) and 136–139 (NKVD) each bind GTP. Residues 136 to 139 (NKVD) are G4. Residues 174 to 176 (SAL) form a G5 region.

Belongs to the TRAFAC class translation factor GTPase superfamily. Classic translation factor GTPase family. EF-Tu/EF-1A subfamily. Monomer.

The protein localises to the cytoplasm. The catalysed reaction is GTP + H2O = GDP + phosphate + H(+). Functionally, GTP hydrolase that promotes the GTP-dependent binding of aminoacyl-tRNA to the A-site of ribosomes during protein biosynthesis. The sequence is that of Elongation factor Tu 1 from Roseiflexus castenholzii (strain DSM 13941 / HLO8).